We begin with the raw amino-acid sequence, 157 residues long: uncharacterized protein (157 aa).

In terms of domain architecture, HD spans 33-134 (NLKHFLDVAR…MYRADKLSRL (102 aa)).

This is an uncharacterized protein from Clostridium beijerinckii (strain ATCC 51743 / NCIMB 8052) (Clostridium acetobutylicum).